Here is a 588-residue protein sequence, read N- to C-terminus: Aspartate--tRNA ligase (588 aa).

Residue Glu-177 participates in L-aspartate binding. The aspartate stretch occupies residues 201–204 (QLFK). Residue Arg-223 coordinates L-aspartate. ATP is bound by residues 223-225 (RDE) and Gln-232. An L-aspartate-binding site is contributed by His-451. Position 485 (Glu-485) interacts with ATP. Residue Arg-492 participates in L-aspartate binding. 537–540 (GLDR) lines the ATP pocket.

The protein belongs to the class-II aminoacyl-tRNA synthetase family. Type 1 subfamily. In terms of assembly, homodimer.

It is found in the cytoplasm. The enzyme catalyses tRNA(Asp) + L-aspartate + ATP = L-aspartyl-tRNA(Asp) + AMP + diphosphate. Functionally, catalyzes the attachment of L-aspartate to tRNA(Asp) in a two-step reaction: L-aspartate is first activated by ATP to form Asp-AMP and then transferred to the acceptor end of tRNA(Asp). This Staphylococcus haemolyticus (strain JCSC1435) protein is Aspartate--tRNA ligase.